The following is a 315-amino-acid chain: Transaldolase (315 aa).

K131 acts as the Schiff-base intermediate with substrate in catalysis.

It belongs to the transaldolase family. Type 1 subfamily. Homodimer.

The protein resides in the cytoplasm. It catalyses the reaction D-sedoheptulose 7-phosphate + D-glyceraldehyde 3-phosphate = D-erythrose 4-phosphate + beta-D-fructose 6-phosphate. It functions in the pathway carbohydrate degradation; pentose phosphate pathway; D-glyceraldehyde 3-phosphate and beta-D-fructose 6-phosphate from D-ribose 5-phosphate and D-xylulose 5-phosphate (non-oxidative stage): step 2/3. Functionally, transaldolase is important for the balance of metabolites in the pentose-phosphate pathway. The sequence is that of Transaldolase from Actinobacillus pleuropneumoniae serotype 3 (strain JL03).